We begin with the raw amino-acid sequence, 273 residues long: Dermonecrotic toxin SdSicTox-betaIIB1bxi (273 aa).

His4 is an active-site residue. Positions 24 and 26 each coordinate Mg(2+). The Nucleophile role is filled by His40. 2 cysteine pairs are disulfide-bonded: Cys44–Cys50 and Cys46–Cys189. Asp84 contacts Mg(2+).

The protein belongs to the arthropod phospholipase D family. Class II subfamily. Mg(2+) serves as cofactor. Expressed by the venom gland.

The protein resides in the secreted. The enzyme catalyses an N-(acyl)-sphingosylphosphocholine = an N-(acyl)-sphingosyl-1,3-cyclic phosphate + choline. It carries out the reaction an N-(acyl)-sphingosylphosphoethanolamine = an N-(acyl)-sphingosyl-1,3-cyclic phosphate + ethanolamine. The catalysed reaction is a 1-acyl-sn-glycero-3-phosphocholine = a 1-acyl-sn-glycero-2,3-cyclic phosphate + choline. It catalyses the reaction a 1-acyl-sn-glycero-3-phosphoethanolamine = a 1-acyl-sn-glycero-2,3-cyclic phosphate + ethanolamine. In terms of biological role, dermonecrotic toxins cleave the phosphodiester linkage between the phosphate and headgroup of certain phospholipids (sphingolipid and lysolipid substrates), forming an alcohol (often choline) and a cyclic phosphate. This toxin acts on sphingomyelin (SM). It may also act on ceramide phosphoethanolamine (CPE), lysophosphatidylcholine (LPC) and lysophosphatidylethanolamine (LPE), but not on lysophosphatidylserine (LPS), and lysophosphatidylglycerol (LPG). It acts by transphosphatidylation, releasing exclusively cyclic phosphate products as second products. Induces dermonecrosis, hemolysis, increased vascular permeability, edema, inflammatory response, and platelet aggregation. In Sicarius cf. damarensis (strain GJB-2008) (Six-eyed sand spider), this protein is Dermonecrotic toxin SdSicTox-betaIIB1bxi.